A 90-amino-acid polypeptide reads, in one-letter code: Probable Fe(2+)-trafficking protein (90 aa).

This sequence belongs to the Fe(2+)-trafficking protein family. Monomer.

Its function is as follows. Could be a mediator in iron transactions between iron acquisition and iron-requiring processes, such as synthesis and/or repair of Fe-S clusters in biosynthetic enzymes. This is Probable Fe(2+)-trafficking protein from Proteus mirabilis (strain HI4320).